The primary structure comprises 185 residues: Ribosome-recycling factor (185 aa).

Belongs to the RRF family.

The protein resides in the cytoplasm. In terms of biological role, responsible for the release of ribosomes from messenger RNA at the termination of protein biosynthesis. May increase the efficiency of translation by recycling ribosomes from one round of translation to another. This is Ribosome-recycling factor from Shewanella halifaxensis (strain HAW-EB4).